The sequence spans 73 residues: Translation initiation factor IF-1 (73 aa).

Residues Met1–Lys72 enclose the S1-like domain.

This sequence belongs to the IF-1 family. As to quaternary structure, component of the 30S ribosomal translation pre-initiation complex which assembles on the 30S ribosome in the order IF-2 and IF-3, IF-1 and N-formylmethionyl-tRNA(fMet); mRNA recruitment can occur at any time during PIC assembly.

It localises to the cytoplasm. One of the essential components for the initiation of protein synthesis. Stabilizes the binding of IF-2 and IF-3 on the 30S subunit to which N-formylmethionyl-tRNA(fMet) subsequently binds. Helps modulate mRNA selection, yielding the 30S pre-initiation complex (PIC). Upon addition of the 50S ribosomal subunit IF-1, IF-2 and IF-3 are released leaving the mature 70S translation initiation complex. This Syntrophobacter fumaroxidans (strain DSM 10017 / MPOB) protein is Translation initiation factor IF-1.